The primary structure comprises 495 residues: Cytochrome P450 monooxygenase 113 (495 aa).

Residues 2–22 (FLQIAACFTVIGLLYGLVSNL) form a helical membrane-spanning segment. C428 provides a ligand contact to heme.

It belongs to the cytochrome P450 family. Requires heme as cofactor.

The protein localises to the membrane. It participates in secondary metabolite biosynthesis. Its function is as follows. Cytochrome P450 monooxygenase that is able to use 4-ethoxybenzoic acid as a substrate for oxidation. This is Cytochrome P450 monooxygenase 113 from Postia placenta (strain ATCC 44394 / Madison 698-R) (Brown rot fungus).